Consider the following 432-residue polypeptide: Amino-acid acetyltransferase (432 aa).

Residues 286 to 425 form the N-acetyltransferase domain; it reads ERVREAAIED…ASLYNYQRNS (140 aa).

The protein belongs to the acetyltransferase family. ArgA subfamily.

It localises to the cytoplasm. The enzyme catalyses L-glutamate + acetyl-CoA = N-acetyl-L-glutamate + CoA + H(+). It functions in the pathway amino-acid biosynthesis; L-arginine biosynthesis; N(2)-acetyl-L-ornithine from L-glutamate: step 1/4. This Pseudomonas fluorescens (strain ATCC BAA-477 / NRRL B-23932 / Pf-5) protein is Amino-acid acetyltransferase.